We begin with the raw amino-acid sequence, 274 residues long: Coat protein (274 aa).

The segment at 88-112 (RPAKQVLKGSSSKSQQRDEGEVVFT) is disordered. Residues 102–112 (QQRDEGEVVFT) are compositionally biased toward basic and acidic residues.

It localises to the virion. The protein is Coat protein of Rubus idaeus (Raspberry).